Here is a 745-residue protein sequence, read N- to C-terminus: NAD(P)H-quinone oxidoreductase subunit 5, chloroplastic (745 aa).

Helical transmembrane passes span 9–29 (WIIPFVPLPIPILIGMGLLLF), 50–70 (WAFPNILLLSIVMIFSLDLSI), 99–119 (IDSLTSIMSILITTVGIFVLI), 135–155 (FAYMSLFNTSMLGLVTSCNLI), 157–177 (IYIFWELVGMCSYLLIGFWFT), 194–214 (IGDFGLLLGILGFYWITGSFE), 229–249 (NEVHFLFVTLCASLLFAGAVA), 268–288 (TPISALIHAATMVAAGIFLVA), 290–310 (LFPLFIVIPYIMNLISLIGII), 337–357 (LGYMMLALGMGSYRAALFHLI), 364–384 (ALLFLASGSIIHSMEAIVGYS), 406–426 (IAFLVGTLSLCGIPPLACFWS), 435–455 (WLYSPIFAIIAWSTAGLTAFY), 550–570 (LFPMLILLLFTLFVGAIAIPF), 610–630 (FSVSIACFGIFTAFLLYKPFY), and 724–744 (FYLLLYLVYVFIFLVISYFIL).

Belongs to the complex I subunit 5 family. In terms of assembly, NDH is composed of at least 16 different subunits, 5 of which are encoded in the nucleus.

It localises to the plastid. Its subcellular location is the chloroplast thylakoid membrane. It catalyses the reaction a plastoquinone + NADH + (n+1) H(+)(in) = a plastoquinol + NAD(+) + n H(+)(out). The enzyme catalyses a plastoquinone + NADPH + (n+1) H(+)(in) = a plastoquinol + NADP(+) + n H(+)(out). Its function is as follows. NDH shuttles electrons from NAD(P)H:plastoquinone, via FMN and iron-sulfur (Fe-S) centers, to quinones in the photosynthetic chain and possibly in a chloroplast respiratory chain. The immediate electron acceptor for the enzyme in this species is believed to be plastoquinone. Couples the redox reaction to proton translocation, and thus conserves the redox energy in a proton gradient. This chain is NAD(P)H-quinone oxidoreductase subunit 5, chloroplastic (ndhF), found in Gossypium barbadense (Sea Island cotton).